The chain runs to 295 residues: Formamidopyrimidine-DNA glycosylase (295 aa).

The Schiff-base intermediate with DNA role is filled by P2. The active-site Proton donor is E3. The active-site Proton donor; for beta-elimination activity is the K61. DNA is bound by residues H95, R117, and R159. The FPG-type zinc-finger motif lies at 245-279 (HAYGREGEACERCGTPIRRVAFMNRSSYFCPVCQP). The Proton donor; for delta-elimination activity role is filled by R269.

It belongs to the FPG family. As to quaternary structure, monomer. It depends on Zn(2+) as a cofactor.

The enzyme catalyses Hydrolysis of DNA containing ring-opened 7-methylguanine residues, releasing 2,6-diamino-4-hydroxy-5-(N-methyl)formamidopyrimidine.. It carries out the reaction 2'-deoxyribonucleotide-(2'-deoxyribose 5'-phosphate)-2'-deoxyribonucleotide-DNA = a 3'-end 2'-deoxyribonucleotide-(2,3-dehydro-2,3-deoxyribose 5'-phosphate)-DNA + a 5'-end 5'-phospho-2'-deoxyribonucleoside-DNA + H(+). Functionally, involved in base excision repair of DNA damaged by oxidation or by mutagenic agents. Acts as a DNA glycosylase that recognizes and removes damaged bases. Has a preference for oxidized purines, such as 7,8-dihydro-8-oxoguanine (8-oxoG). Has AP (apurinic/apyrimidinic) lyase activity and introduces nicks in the DNA strand. Cleaves the DNA backbone by beta-delta elimination to generate a single-strand break at the site of the removed base with both 3'- and 5'-phosphates. The protein is Formamidopyrimidine-DNA glycosylase of Nocardioides sp. (strain ATCC BAA-499 / JS614).